We begin with the raw amino-acid sequence, 126 residues long: Aspartate 1-decarboxylase (126 aa).

Catalysis depends on Ser25, which acts as the Schiff-base intermediate with substrate; via pyruvic acid. The residue at position 25 (Ser25) is a Pyruvic acid (Ser). Thr57 serves as a coordination point for substrate. The Proton donor role is filled by Tyr58. 73 to 75 is a substrate binding site; the sequence is GAA.

It belongs to the PanD family. Heterooctamer of four alpha and four beta subunits. Pyruvate is required as a cofactor. Post-translationally, is synthesized initially as an inactive proenzyme, which is activated by self-cleavage at a specific serine bond to produce a beta-subunit with a hydroxyl group at its C-terminus and an alpha-subunit with a pyruvoyl group at its N-terminus.

It localises to the cytoplasm. It carries out the reaction L-aspartate + H(+) = beta-alanine + CO2. The protein operates within cofactor biosynthesis; (R)-pantothenate biosynthesis; beta-alanine from L-aspartate: step 1/1. Functionally, catalyzes the pyruvoyl-dependent decarboxylation of aspartate to produce beta-alanine. In Methylobacillus flagellatus (strain ATCC 51484 / DSM 6875 / VKM B-1610 / KT), this protein is Aspartate 1-decarboxylase.